Reading from the N-terminus, the 214-residue chain is Germin-like protein 9-3 (214 aa).

The first 23 residues, 1–23, serve as a signal peptide directing secretion; the sequence is MASSILLLVVLAVVSAPVALVMA. N-linked (GlcNAc...) asparagine glycosylation is found at N42, N60, and N69. The 144-residue stretch at 59–202 folds into the Cupin type-1 domain; it reads MNMSMPMPNA…SFKTDVPTIQ (144 aa). Mn(2+) is bound by residues H104, H106, E111, and H150.

This sequence belongs to the germin family. In terms of assembly, oligomer (believed to be a pentamer but probably hexamer).

Its subcellular location is the secreted. It is found in the extracellular space. The protein localises to the apoplast. In terms of biological role, may play a role in plant defense. Probably has no oxalate oxidase activity even if the active site is conserved. This is Germin-like protein 9-3 from Oryza sativa subsp. japonica (Rice).